Here is a 226-residue protein sequence, read N- to C-terminus: Uracil-DNA glycosylase (226 aa).

The active-site Proton acceptor is the Asp68.

This sequence belongs to the uracil-DNA glycosylase (UDG) superfamily. UNG family.

It localises to the cytoplasm. It catalyses the reaction Hydrolyzes single-stranded DNA or mismatched double-stranded DNA and polynucleotides, releasing free uracil.. Its function is as follows. Excises uracil residues from the DNA which can arise as a result of misincorporation of dUMP residues by DNA polymerase or due to deamination of cytosine. In Mycobacteroides abscessus (strain ATCC 19977 / DSM 44196 / CCUG 20993 / CIP 104536 / JCM 13569 / NCTC 13031 / TMC 1543 / L948) (Mycobacterium abscessus), this protein is Uracil-DNA glycosylase.